Consider the following 235-residue polypeptide: ATP-dependent dethiobiotin synthetase BioD (235 aa).

Residue 12-17 coordinates ATP; it reads GVGKTF. Thr16 is a Mg(2+) binding site. Residue Lys37 is part of the active site. Ser41 serves as a coordination point for substrate. Residues Asp51, 112–115, and 202–204 each bind ATP; these read EGAG and PKL. Residues Asp51 and Glu112 each contribute to the Mg(2+) site.

Belongs to the dethiobiotin synthetase family. As to quaternary structure, homodimer. Mg(2+) is required as a cofactor.

It is found in the cytoplasm. The catalysed reaction is (7R,8S)-7,8-diammoniononanoate + CO2 + ATP = (4R,5S)-dethiobiotin + ADP + phosphate + 3 H(+). Its pathway is cofactor biosynthesis; biotin biosynthesis; biotin from 7,8-diaminononanoate: step 1/2. Catalyzes a mechanistically unusual reaction, the ATP-dependent insertion of CO2 between the N7 and N8 nitrogen atoms of 7,8-diaminopelargonic acid (DAPA, also called 7,8-diammoniononanoate) to form a ureido ring. The polypeptide is ATP-dependent dethiobiotin synthetase BioD (Bacillus licheniformis (strain ATCC 14580 / DSM 13 / JCM 2505 / CCUG 7422 / NBRC 12200 / NCIMB 9375 / NCTC 10341 / NRRL NRS-1264 / Gibson 46)).